Here is a 151-residue protein sequence, read N- to C-terminus: Large-conductance mechanosensitive channel (151 aa).

2 consecutive transmembrane segments (helical) span residues 14–34 and 85–105; these read VVDM…VNSL and GLFV…FLLV.

It belongs to the MscL family. As to quaternary structure, homopentamer.

It is found in the cell inner membrane. Its function is as follows. Channel that opens in response to stretch forces in the membrane lipid bilayer. May participate in the regulation of osmotic pressure changes within the cell. This is Large-conductance mechanosensitive channel from Chlorobaculum tepidum (strain ATCC 49652 / DSM 12025 / NBRC 103806 / TLS) (Chlorobium tepidum).